A 151-amino-acid chain; its full sequence is Neuroglobin (151 aa).

A Globin domain is found at 1–149 (MERPEPELIR…VVQAMSRGWD (149 aa)). Cysteines 46 and 55 form a disulfide. Heme b-binding residues include His-64 and His-96.

It belongs to the globin family. In terms of assembly, monomer. Homodimer and homotetramer; disulfide-linked. Mainly monomeric but also detected as part of homodimers and homotetramers. Interacts with 14-3-3 proteins; regulates the phosphorylation of NGB. Could interact (ferrous form) with G-alpha(i) proteins (GTP-bound form). Phosphorylated during hypoxia by ERK1/ERK2. Phosphorylation regulates the heme pocket hexacoordination preventing the association of His-64 with the heme metal center. Thereby, promotes the access of dioxygen and nitrite to the heme and stimulates the nitrite reductase activity. Phosphorylation during hypoxia is stabilized by 14-3-3 proteins. In terms of processing, an intramolecular Cys-46/Cys-55 disulfide bond, not necessarily present in orthologs, regulates the heme pocket hexacoordination preventing the association of His-64 with the heme metal center. Thereby, promotes the access of dioxygen and nitrite to the heme and stimulates the nitrite reductase activity. Predominantly expressed in brain, the strongest expression is seen in the frontal lobe, the subthalamic nucleus and the thalamus.

It is found in the cytoplasm. Its subcellular location is the cytosol. It localises to the mitochondrion matrix. It catalyses the reaction Fe(III)-heme b-[protein] + nitric oxide + H2O = Fe(II)-heme b-[protein] + nitrite + 2 H(+). In terms of biological role, monomeric globin with a bis-histidyl six-coordinate heme-iron atom through which it can bind dioxygen, carbon monoxide and nitric oxide. Could help transport oxygen and increase its availability to the metabolically active neuronal tissues, though its low quantity in tissues as well as its high affinity for dioxygen, which may limit its oxygen-releasing ability, argue against it. The ferrous/deoxygenated form exhibits a nitrite reductase activity and it could produce nitric oxide which in turn inhibits cellular respiration in response to hypoxia. In its ferrous/deoxygenated state, it may also exhibit GDI (Guanine nucleotide Dissociation Inhibitor) activity toward heterotrimeric G-alpha proteins, thereby regulating signal transduction to facilitate neuroprotective responses in the wake of hypoxia and associated oxidative stress. The chain is Neuroglobin from Homo sapiens (Human).